The following is a 406-amino-acid chain: MNKPVAPNSYKTGPDEEGMFGIFGGRFVAETLMPLILELQQAYETAKNDPEFKAELNALSTFYAGRPSKLYYAEGLSKHLGGAKIYFKREDLNHTGSHKINNCLGQILLAKRMGKTRIIAETGAGQHGVASATVAARFGLPCIVYMGATDVERQKPNVFRMKLLGAEVKPVSAGNGTLKDAMNEALRDWVTNVEDTYYLIGTAAGPHPYPELVRDFQSVIGTEARQQILEQEGRLPDVIVAAVGGGSNAIGLFHPFLDDASVKIVGVEAGGRGLEGEEHCASMSAGRPGVLHGNRTYLLQNADGQILEGHSVSAGLDYPGVGPEHSWLKDSGRVDYVPILDNEALDAFQLCTRTEGIIPALESAHAIAQAVKMAPTMGKDKVMIVNLSGRGDKDVHTVGKLLGMDI.

Lys99 carries the N6-(pyridoxal phosphate)lysine modification.

It belongs to the TrpB family. As to quaternary structure, tetramer of two alpha and two beta chains. It depends on pyridoxal 5'-phosphate as a cofactor.

The enzyme catalyses (1S,2R)-1-C-(indol-3-yl)glycerol 3-phosphate + L-serine = D-glyceraldehyde 3-phosphate + L-tryptophan + H2O. It functions in the pathway amino-acid biosynthesis; L-tryptophan biosynthesis; L-tryptophan from chorismate: step 5/5. The beta subunit is responsible for the synthesis of L-tryptophan from indole and L-serine. The sequence is that of Tryptophan synthase beta chain from Brucella canis (strain ATCC 23365 / NCTC 10854 / RM-666).